The following is a 148-amino-acid chain: Deoxyuridine 5'-triphosphate nucleotidohydrolase (148 aa).

Substrate is bound by residues 65 to 67, N78, 82 to 84, and K92; these read RSG and TID.

Belongs to the dUTPase family. The cofactor is Mg(2+).

The enzyme catalyses dUTP + H2O = dUMP + diphosphate + H(+). It functions in the pathway pyrimidine metabolism; dUMP biosynthesis; dUMP from dCTP (dUTP route): step 2/2. This enzyme is involved in nucleotide metabolism: it produces dUMP, the immediate precursor of thymidine nucleotides and it decreases the intracellular concentration of dUTP so that uracil cannot be incorporated into DNA. The protein is Deoxyuridine 5'-triphosphate nucleotidohydrolase of Chlorobium luteolum (strain DSM 273 / BCRC 81028 / 2530) (Pelodictyon luteolum).